Consider the following 517-residue polypeptide: L-amino-acid oxidase (517 aa).

The signal sequence occupies residues 1–18; the sequence is MNVFFMFSLLFLAALESC. A disulfide bond links C29 and C192. FAD is bound by residues 62–63, 82–83, R90, and 106–109; these read MA, EA, and GPMR. R109 provides a ligand contact to substrate. N191 is a glycosylation site (N-linked (GlcNAc...) asparagine). Residue V280 participates in FAD binding. Cysteines 350 and 431 form a disulfide. Position 391 (Y391) interacts with substrate. FAD contacts are provided by residues E476 and 483 to 488; that span reads GWIDST. Residue 483–484 participates in substrate binding; the sequence is GW.

The protein belongs to the flavin monoamine oxidase family. FIG1 subfamily. Homodimer; non-covalently linked. FAD serves as cofactor. In terms of processing, N-glycosylated. Expressed by the venom gland.

It is found in the secreted. The enzyme catalyses an L-alpha-amino acid + O2 + H2O = a 2-oxocarboxylate + H2O2 + NH4(+). Catalyzes an oxidative deamination of predominantly hydrophobic and aromatic L-amino acids, thus producing hydrogen peroxide that may contribute to the diverse toxic effects of this enzyme. Exhibits diverse biological activities, such as hemorrhage, hemolysis, edema, apoptosis of vascular endothelial cells or tumor cell lines, antibacterial and antiparasitic activities, as well as regulation of platelet aggregation. Its effect on platelets is controversial, since it either induces aggregation or inhibits agonist-induced aggregation. These different effects are probably due to different experimental conditions. This is L-amino-acid oxidase from Demansia vestigiata (Lesser black whip snake).